Consider the following 274-residue polypeptide: Actin-binding protein Smlt3054 (274 aa).

2 ANK repeats span residues Ser192 to Ala221 and His225 to Gln254. Residues Asn251 to Leu274 form a disordered region.

Exists as a dimer as well as a higher order oligomer.

It localises to the secreted. The protein resides in the periplasm. Its function is as follows. Directly binds F-actin, which results in thickened and distorted F-actin fibers, and affects cellular F-actin localization. Thus, may be a host effector whose function is to disrupt host actin cytoskeletal structure, which may enhance invasion. This Stenotrophomonas maltophilia (strain K279a) protein is Actin-binding protein Smlt3054.